A 128-amino-acid chain; its full sequence is uncharacterized protein (128 aa).

Residues Met1–Ser11 show a composition bias toward basic and acidic residues. Residues Met1 to Asp40 are disordered. Polar residues predominate over residues Lys12–Asn37.

This is an uncharacterized protein from Caenorhabditis elegans.